The chain runs to 256 residues: Protein FixA (256 aa).

The protein belongs to the ETF beta-subunit/FixA family. In terms of assembly, heterodimer of FixA and FixB.

It functions in the pathway amine and polyamine metabolism; carnitine metabolism. In terms of biological role, required for anaerobic carnitine reduction. May bring reductant to CaiA. The protein is Protein FixA of Salmonella agona (strain SL483).